A 434-amino-acid polypeptide reads, in one-letter code: Serine hydroxymethyltransferase 2 (434 aa).

Residues L136 and 140 to 142 (GHL) contribute to the (6S)-5,6,7,8-tetrahydrofolate site. An N6-(pyridoxal phosphate)lysine modification is found at K245.

Belongs to the SHMT family. In terms of assembly, homodimer. It depends on pyridoxal 5'-phosphate as a cofactor.

The protein resides in the cytoplasm. It catalyses the reaction (6R)-5,10-methylene-5,6,7,8-tetrahydrofolate + glycine + H2O = (6S)-5,6,7,8-tetrahydrofolate + L-serine. It participates in one-carbon metabolism; tetrahydrofolate interconversion. The protein operates within amino-acid biosynthesis; glycine biosynthesis; glycine from L-serine: step 1/1. Functionally, catalyzes the reversible interconversion of serine and glycine with tetrahydrofolate (THF) serving as the one-carbon carrier. This reaction serves as the major source of one-carbon groups required for the biosynthesis of purines, thymidylate, methionine, and other important biomolecules. Also exhibits THF-independent aldolase activity toward beta-hydroxyamino acids, producing glycine and aldehydes, via a retro-aldol mechanism. This is Serine hydroxymethyltransferase 2 from Rhodopseudomonas palustris (strain ATCC BAA-98 / CGA009).